We begin with the raw amino-acid sequence, 195 residues long: Putative C-P lyase subunit protein HtxG (195 aa).

This sequence belongs to the PhnH family.

Functionally, belongs to an operon involved in hypophosphite oxidation. Exact function not known. This Stutzerimonas stutzeri (Pseudomonas stutzeri) protein is Putative C-P lyase subunit protein HtxG (htxG).